Here is a 994-residue protein sequence, read N- to C-terminus: Chromatin modification-related protein vid21 (994 aa).

Disordered regions lie at residues 122-275 (PDNL…APPV) and 288-308 (PKVD…ENDV). Composition is skewed to basic and acidic residues over residues 158 to 171 (TIHK…KETI), 178 to 191 (KEVE…EEKG), 204 to 233 (LTEE…KEHE), 254 to 265 (VESKEVKKKEVS), and 288 to 305 (PKVD…KVTE). 2 positions are modified to phosphoserine: Ser298 and Ser378. The HSA domain occupies 475–548 (PKRQNEMPRL…SKNKKPYMQE (74 aa)). The disordered stretch occupies residues 671-693 (SFMEKKARSDENQLDGNKIKDDN). The span at 672–693 (FMEKKARSDENQLDGNKIKDDN) shows a compositional bias: basic and acidic residues. Residues 713-773 (KDIRPEAPWL…DCFERWIQVD (61 aa)) form the Myb-like domain. Disordered stretches follow at residues 857–880 (TMTK…PSPL) and 975–994 (EQIH…ERTQ). Residues 880 to 912 (LELSRLKSEREAQIQQIQAQRNFAQLQSQNRAL) are a coiled coil.

This sequence belongs to the EAF1 family. In terms of assembly, component of the NuA4 histone acetyltransferase complex.

It localises to the nucleus. Component of the NuA4 histone acetyltransferase complex which is involved in transcriptional activation of selected genes principally by acetylation of nucleosomal histone H4 and H2A. The NuA4 complex is also involved in DNA repair. The protein is Chromatin modification-related protein vid21 (vid21) of Schizosaccharomyces pombe (strain 972 / ATCC 24843) (Fission yeast).